Reading from the N-terminus, the 346-residue chain is Phenylalanine--tRNA ligase alpha subunit (346 aa).

Position 261 (E261) interacts with Mg(2+).

This sequence belongs to the class-II aminoacyl-tRNA synthetase family. Phe-tRNA synthetase alpha subunit type 1 subfamily. In terms of assembly, tetramer of two alpha and two beta subunits. The cofactor is Mg(2+).

Its subcellular location is the cytoplasm. The enzyme catalyses tRNA(Phe) + L-phenylalanine + ATP = L-phenylalanyl-tRNA(Phe) + AMP + diphosphate + H(+). The sequence is that of Phenylalanine--tRNA ligase alpha subunit from Streptococcus agalactiae serotype Ia (strain ATCC 27591 / A909 / CDC SS700).